The chain runs to 279 residues: Osmoprotective compounds uptake permease protein GgtC (279 aa).

7 helical membrane-spanning segments follow: residues Leu7–Phe27, Leu58–Val78, Ile90–Tyr110, Ile120–Glu140, Phe146–Ala166, Leu202–Val222, and Phe247–Thr267. Residues Phe53 to Arg270 enclose the ABC transmembrane type-1 domain.

The protein belongs to the binding-protein-dependent transport system permease family. In terms of assembly, the complex is composed of two ATP-binding proteins (GgtA), two transmembrane proteins (GgtC and GgtD) and a solute-binding protein (GgtB).

It localises to the cell membrane. Functionally, part of the ABC transporter complex GgtABCD involved in the uptake of the osmoprotective compounds glucosylglycerol (GG), sucrose and trehalose. Responsible for the translocation of the substrate across the membrane. This Synechocystis sp. (strain ATCC 27184 / PCC 6803 / Kazusa) protein is Osmoprotective compounds uptake permease protein GgtC.